The sequence spans 394 residues: Flap endonuclease 1 (394 aa).

The N-domain stretch occupies residues methionine 1 to lysine 104. Aspartate 34 provides a ligand contact to Mg(2+). Positions 47 and 70 each coordinate DNA. Mg(2+)-binding residues include aspartate 86, glutamate 158, glutamate 160, aspartate 179, and aspartate 181. An I-domain region spans residues aspartate 122–histidine 253. Glutamate 158 is a binding site for DNA. DNA is bound by residues glycine 231 and aspartate 233. Position 233 (aspartate 233) interacts with Mg(2+). Residues glutamine 340 to phenylalanine 348 are interaction with PCNA. Residues glutamine 358 to alanine 394 form a disordered region. Residues lysine 374–alanine 394 show a composition bias toward basic residues.

The protein belongs to the XPG/RAD2 endonuclease family. FEN1 subfamily. Interacts with PCNA. Three molecules of FEN1 bind to one PCNA trimer with each molecule binding to one PCNA monomer. PCNA stimulates the nuclease activity without altering cleavage specificity. Mg(2+) serves as cofactor. Phosphorylated. Phosphorylation upon DNA damage induces relocalization to the nuclear plasma.

It localises to the nucleus. Its subcellular location is the nucleolus. It is found in the nucleoplasm. The protein localises to the mitochondrion. Functionally, structure-specific nuclease with 5'-flap endonuclease and 5'-3' exonuclease activities involved in DNA replication and repair. During DNA replication, cleaves the 5'-overhanging flap structure that is generated by displacement synthesis when DNA polymerase encounters the 5'-end of a downstream Okazaki fragment. It enters the flap from the 5'-end and then tracks to cleave the flap base, leaving a nick for ligation. Also involved in the long patch base excision repair (LP-BER) pathway, by cleaving within the apurinic/apyrimidinic (AP) site-terminated flap. Acts as a genome stabilization factor that prevents flaps from equilibrating into structures that lead to duplications and deletions. Also possesses 5'-3' exonuclease activity on nicked or gapped double-stranded DNA, and exhibits RNase H activity. Also involved in replication and repair of rDNA and in repairing mitochondrial DNA. The protein is Flap endonuclease 1 of Pyricularia oryzae (strain 70-15 / ATCC MYA-4617 / FGSC 8958) (Rice blast fungus).